We begin with the raw amino-acid sequence, 487 residues long: Beta-barrel assembly-enhancing protease (487 aa).

A signal peptide spans 1-27 (MFRQLKKNLVATLIAALALGQVAPAFA). Residue H136 participates in Zn(2+) binding. Residue E137 is part of the active site. Zn(2+) contacts are provided by H140 and E201. D205 serves as the catalytic Proton donor. 2 TPR repeats span residues 309–342 (HAAQYGRALQAMEASKYDEARKTLQPLLSAEPNN) and 427–460 (DQELAARAESYALAGRLDQAISLLSSASAQAKLG).

This sequence belongs to the peptidase M48 family. BepA subfamily. Zn(2+) is required as a cofactor.

The protein resides in the periplasm. Functionally, functions both as a chaperone and a metalloprotease. Maintains the integrity of the outer membrane by promoting either the assembly or the elimination of outer membrane proteins, depending on their folding state. The polypeptide is Beta-barrel assembly-enhancing protease (Salmonella typhi).